A 101-amino-acid polypeptide reads, in one-letter code: CRISPR-associated endoribonuclease Cas2 (101 aa).

Mg(2+) is bound at residue Asp-8.

It belongs to the CRISPR-associated endoribonuclease Cas2 protein family. As to quaternary structure, homodimer, forms a heterotetramer with a Cas1 homodimer. Mg(2+) is required as a cofactor.

In terms of biological role, CRISPR (clustered regularly interspaced short palindromic repeat), is an adaptive immune system that provides protection against mobile genetic elements (viruses, transposable elements and conjugative plasmids). CRISPR clusters contain sequences complementary to antecedent mobile elements and target invading nucleic acids. CRISPR clusters are transcribed and processed into CRISPR RNA (crRNA). Functions as a ssRNA-specific endoribonuclease. Involved in the integration of spacer DNA into the CRISPR cassette. The sequence is that of CRISPR-associated endoribonuclease Cas2 from Lacticaseibacillus rhamnosus (strain ATCC 53103 / LMG 18243 / GG) (Lactobacillus rhamnosus).